Here is a 93-residue protein sequence, read N- to C-terminus: uncharacterized protein (93 aa).

Residues 35 to 72 (KSVPPPTPPKPVKKTPSPTLPKPSKQKQEPQVEVNEDR) form a disordered region. Basic and acidic residues predominate over residues 60-72 (QKQEPQVEVNEDR).

This is an uncharacterized protein from Ostreid herpesvirus 1 (isolate France) (OsHV-1).